Reading from the N-terminus, the 229-residue chain is Large ribosomal subunit protein uL1 (229 aa).

It belongs to the universal ribosomal protein uL1 family. As to quaternary structure, part of the 50S ribosomal subunit.

Its function is as follows. Binds directly to 23S rRNA. The L1 stalk is quite mobile in the ribosome, and is involved in E site tRNA release. Protein L1 is also a translational repressor protein, it controls the translation of the L11 operon by binding to its mRNA. This is Large ribosomal subunit protein uL1 from Streptococcus uberis (strain ATCC BAA-854 / 0140J).